A 204-amino-acid polypeptide reads, in one-letter code: Recombination protein RecR (204 aa).

A C4-type zinc finger spans residues 59–74 (CTRCNTFTELEICGTC). One can recognise a Toprim domain in the interval 82–181 (TLLCVVETPA…KVSRLARGVP (100 aa)).

This sequence belongs to the RecR family.

May play a role in DNA repair. It seems to be involved in an RecBC-independent recombinational process of DNA repair. It may act with RecF and RecO. This chain is Recombination protein RecR, found in Cupriavidus metallidurans (strain ATCC 43123 / DSM 2839 / NBRC 102507 / CH34) (Ralstonia metallidurans).